A 165-amino-acid polypeptide reads, in one-letter code: Putative 4-hydroxy-4-methyl-2-oxoglutarate aldolase (165 aa).

Residues 80-83 (GGNL) and Arg102 contribute to the substrate site. Position 103 (Asp103) interacts with a divalent metal cation.

It belongs to the class II aldolase/RraA-like family. In terms of assembly, homotrimer. Requires a divalent metal cation as cofactor.

It catalyses the reaction 4-hydroxy-4-methyl-2-oxoglutarate = 2 pyruvate. The enzyme catalyses oxaloacetate + H(+) = pyruvate + CO2. Catalyzes the aldol cleavage of 4-hydroxy-4-methyl-2-oxoglutarate (HMG) into 2 molecules of pyruvate. Also contains a secondary oxaloacetate (OAA) decarboxylase activity due to the common pyruvate enolate transition state formed following C-C bond cleavage in the retro-aldol and decarboxylation reactions. The sequence is that of Putative 4-hydroxy-4-methyl-2-oxoglutarate aldolase from Cupriavidus necator (strain ATCC 17699 / DSM 428 / KCTC 22496 / NCIMB 10442 / H16 / Stanier 337) (Ralstonia eutropha).